The sequence spans 339 residues: MPNTKPRIVITMGDPTGVGPEIIAATLAEPEVRQCCRFLVVGDSAAMARGITVAGAALRVERTDTLNWEESKEGVLPLWEISSLTEADMQYGCPTVASGDAMYRAICEAARLCLEGNADAMATAPISKEALNRAGHRYPGHTELLAELAGAERVVMMLAGFRLRVTLVTIHEALADVPRLVTFERVLETIRITHRDLHRYFRRNPRIAVLALNPHCGEGGMFGDEEARIIAPAVAAARQEGIDAIGPLSADTLFHFAVQGAYDAVVCMYHDQGLIPLKLLHFDDGVNVTLGLPIIRTSVDHGTAYDLAGTGRASAESMKAAILMAAEMARVKGSGGGTP.

2 residues coordinate substrate: His-141 and Thr-142. His-171, His-215, and His-270 together coordinate a divalent metal cation. Substrate-binding residues include Lys-278, Asn-287, and Arg-296.

This sequence belongs to the PdxA family. In terms of assembly, homodimer. Zn(2+) is required as a cofactor. Mg(2+) serves as cofactor. The cofactor is Co(2+).

It localises to the cytoplasm. The enzyme catalyses 4-(phosphooxy)-L-threonine + NAD(+) = 3-amino-2-oxopropyl phosphate + CO2 + NADH. It participates in cofactor biosynthesis; pyridoxine 5'-phosphate biosynthesis; pyridoxine 5'-phosphate from D-erythrose 4-phosphate: step 4/5. In terms of biological role, catalyzes the NAD(P)-dependent oxidation of 4-(phosphooxy)-L-threonine (HTP) into 2-amino-3-oxo-4-(phosphooxy)butyric acid which spontaneously decarboxylates to form 3-amino-2-oxopropyl phosphate (AHAP). This Geobacter metallireducens (strain ATCC 53774 / DSM 7210 / GS-15) protein is 4-hydroxythreonine-4-phosphate dehydrogenase.